The primary structure comprises 471 residues: MDTSSVTMHTERACCHQAQRAVAAMLDKAPSWLIWTAVLYVGLPFMLYWAVPYLFYHNKTKSRRIAIYVLGDLGHSPRICYHARSFSAAGWEVELCGYLEEQPPKDLLDDPRVTIRALPGASNAGKSLGQTARKVVLQTCHIVRQLWELRGCDYILIQNPPSIPLLPIVAIFKVLTRTRLILDWHNFAYTVLQLRVGRFLHPLVLVSYAVEFLFSRMADYHITVTAAMKDYLVQSFLLPARRIAVMYDRPGEQFRPLPAGERGAALAEPFIRGYIPAGFDVQRGDTILVTSTSFTLDEDINVLFGALKIYESAAAKFDTTLPRILLFVTGKGPLKGKYMEEVRNYKWERCTIHFLWLSAEDYPRLLQLCDFGVSLHTSTSGLDLPMKVLDMFGSGLPAFVMDYPAIGELVQDRVNGLRFTTRRELEQCLIFAIKDEHTRKVLKENALLESKNRWHQSWASAMSELQVVRQS.

Topologically, residues 1–31 (MDTSSVTMHTERACCHQAQRAVAAMLDKAPS) are lumenal. The helical transmembrane segment at 32-52 (WLIWTAVLYVGLPFMLYWAVP) threads the bilayer. The Cytoplasmic portion of the chain corresponds to 53–126 (YLFYHNKTKS…ALPGASNAGK (74 aa)). Residues 127–147 (SLGQTARKVVLQTCHIVRQLW) constitute an intramembrane region (helical). Residues 148–471 (ELRGCDYILI…MSELQVVRQS (324 aa)) lie on the Cytoplasmic side of the membrane.

Belongs to the glycosyltransferase group 1 family.

The protein resides in the endoplasmic reticulum membrane. The enzyme catalyses an N,N'-diacetylchitobiosyl-diphospho-di-trans,poly-cis-dolichol + GDP-alpha-D-mannose = a beta-D-Man-(1-&gt;4)-beta-D-GlcNAc-(1-&gt;4)-alpha-D-GlcNAc-diphospho-di-trans,poly-cis-dolichol + GDP + H(+). The protein operates within protein modification; protein glycosylation. Functionally, participates in the formation of the lipid-linked precursor oligosaccharide for N-glycosylation. Involved in assembling the dolichol-pyrophosphate-GlcNAc(2)-Man(5) intermediate on the cytoplasmic surface of the ER. This is Chitobiosyldiphosphodolichol beta-mannosyltransferase (ALG1) from Eremothecium gossypii (strain ATCC 10895 / CBS 109.51 / FGSC 9923 / NRRL Y-1056) (Yeast).